Here is a 205-residue protein sequence, read N- to C-terminus: Guanylyl cyclase-activating protein 1 (205 aa).

G2 carries N-myristoyl glycine lipidation. The residue at position 3 (N3) is a Deamidated asparagine. EF-hand domains lie at 14–49 (SSTE…KNLS), 51–86 (WASQ…VLKG), 87–122 (KVEQ…IRAI), and 131–166 (TAEE…DQML). D64, N66, D68, Y70, E75, D100, D102, N104, C106, E111, D144, N146, D148, E150, and E155 together coordinate Ca(2+). The segment at 185 to 205 (NGEQDEEGASGRETEAAEADG) is disordered.

As to quaternary structure, homodimer. Detected in the retina. Detected in rod and cone photoreceptor cells (at protein level). Also present in certain pinealocytes.

The protein localises to the membrane. The protein resides in the photoreceptor inner segment. Its subcellular location is the cell projection. It localises to the cilium. It is found in the photoreceptor outer segment. Functionally, stimulates retinal guanylyl cyclase when free calcium ions concentration is low and inhibits guanylyl cyclase when free calcium ions concentration is elevated. This Ca(2+)-sensitive regulation of retinal guanylyl cyclase is a key event in recovery of the dark state of rod photoreceptors following light exposure. May be involved in cone photoreceptor light response and recovery of response in bright light. The protein is Guanylyl cyclase-activating protein 1 (GUCA1A) of Bos taurus (Bovine).